Consider the following 445-residue polypeptide: Exodeoxyribonuclease 7 large subunit (445 aa).

Belongs to the XseA family. In terms of assembly, heterooligomer composed of large and small subunits.

It is found in the cytoplasm. The catalysed reaction is Exonucleolytic cleavage in either 5'- to 3'- or 3'- to 5'-direction to yield nucleoside 5'-phosphates.. Functionally, bidirectionally degrades single-stranded DNA into large acid-insoluble oligonucleotides, which are then degraded further into small acid-soluble oligonucleotides. The sequence is that of Exodeoxyribonuclease 7 large subunit from Staphylococcus haemolyticus (strain JCSC1435).